A 132-amino-acid polypeptide reads, in one-letter code: NADH-quinone oxidoreductase subunit A (132 aa).

Helical transmembrane passes span Y7 to V27, F62 to W82, and W91 to L111.

It belongs to the complex I subunit 3 family. In terms of assembly, NDH-1 is composed of 14 different subunits. Subunits NuoA, H, J, K, L, M, N constitute the membrane sector of the complex.

The protein localises to the cell inner membrane. The catalysed reaction is a quinone + NADH + 5 H(+)(in) = a quinol + NAD(+) + 4 H(+)(out). Its function is as follows. NDH-1 shuttles electrons from NADH, via FMN and iron-sulfur (Fe-S) centers, to quinones in the respiratory chain. The immediate electron acceptor for the enzyme in this species is believed to be ubiquinone. Couples the redox reaction to proton translocation (for every two electrons transferred, four hydrogen ions are translocated across the cytoplasmic membrane), and thus conserves the redox energy in a proton gradient. This is NADH-quinone oxidoreductase subunit A from Acidiphilium cryptum (strain JF-5).